The following is a 122-amino-acid chain: Large ribosomal subunit protein uL18 (122 aa).

This sequence belongs to the universal ribosomal protein uL18 family. In terms of assembly, part of the 50S ribosomal subunit; part of the 5S rRNA/L5/L18/L25 subcomplex. Contacts the 5S and 23S rRNAs.

Its function is as follows. This is one of the proteins that bind and probably mediate the attachment of the 5S RNA into the large ribosomal subunit, where it forms part of the central protuberance. This is Large ribosomal subunit protein uL18 from Fervidobacterium nodosum (strain ATCC 35602 / DSM 5306 / Rt17-B1).